Consider the following 420-residue polypeptide: Calreticulin (420 aa).

The N-terminal stretch at 1-18 (MKWGVVAVLATLVVAASA) is a signal peptide. Cys-106 and Cys-140 form a disulfide bridge. 4 residues coordinate an alpha-D-glucoside: Tyr-110, Lys-112, Tyr-131, and Asp-138. 7 consecutive repeat copies span residues 194–205 (VASGSLYEDWDM), 213–224 (DPKASKPEDWDE), 230–241 (DPEDKKPEGWDD), 248–259 (DKDAKKPEDWDD), 263–273 (GTWEPPMIPNP), 277–287 (GEWKAKMIKNP), and 291–301 (GIWVAPDIDNP). The tract at residues 194-259 (VASGSLYEDW…DAKKPEDWDD (66 aa)) is 4 X approximate repeats. The span at 210 to 220 (TIKDPKASKPE) shows a compositional bias: basic and acidic residues. Residues 210–272 (TIKDPKASKP…GTWEPPMIPN (63 aa)) are disordered. A compositionally biased stretch (acidic residues) spans 221-230 (DWDEREEIAD). A 3 X approximate repeats region spans residues 263–301 (GTWEPPMIPNPEYKGEWKAKMIKNPAYKGIWVAPDIDNP). Residue Glu-321 participates in an alpha-D-glucoside binding. A compositionally biased stretch (basic and acidic residues) spans 357-376 (EEKAMFDKVKKEEDEKKAKD). A disordered region spans residues 357-420 (EEKAMFDKVK…EEEESGHDEL (64 aa)). Acidic residues-rich tracts occupy residues 385 to 398 (EAAE…EDKE) and 411 to 420 (EEEESGHDEL). The short motif at 417-420 (HDEL) is the Prevents secretion from ER element.

The protein belongs to the calreticulin family.

It is found in the endoplasmic reticulum lumen. Functionally, molecular calcium-binding chaperone promoting folding, oligomeric assembly and quality control in the ER via the calreticulin/calnexin cycle. This lectin may interact transiently with almost all of the monoglucosylated glycoproteins that are synthesized in the ER. In Chlamydomonas reinhardtii (Chlamydomonas smithii), this protein is Calreticulin.